A 379-amino-acid chain; its full sequence is MTSYNPASPDFPFTLGIEEEYQVVDPQTRELRSYITQILDRGKMILREQIKPELHQSMVEVGTHPCRTIQEARAEVVRLRSIIAGLARQHGLTIISAGTHPISSWMSQEITPFERYKGVVEEMQQLALQLLIFGMHVHVGMPDDEVAIELMNVARYFLPHILALSTSSPFWMGRNTGFKSYRSALFANFPRTGIPPSFHSAAEFHNYVNLLIRTNCIDDAKKIYWDLRPHPYFGTLEFRVCDAATRVDECIALAALMQALTVKLHLMFSENTTFRVYRRAVIMENKWRAQRWGLDGKLIDFGKRAEVDARALMYELVAFVDEVLDELGSRQEVEYLLKIAEGGSSADRQLAVFRETNDLNAVVDNLIVETLEGVPAYQA.

The protein belongs to the glutamate--cysteine ligase type 2 family. YbdK subfamily.

It catalyses the reaction L-cysteine + L-glutamate + ATP = gamma-L-glutamyl-L-cysteine + ADP + phosphate + H(+). Its function is as follows. ATP-dependent carboxylate-amine ligase which exhibits weak glutamate--cysteine ligase activity. This Roseiflexus sp. (strain RS-1) protein is Putative glutamate--cysteine ligase 2.